Reading from the N-terminus, the 199-residue chain is Imidazoleglycerol-phosphate dehydratase (199 aa).

It belongs to the imidazoleglycerol-phosphate dehydratase family.

The protein resides in the cytoplasm. It catalyses the reaction D-erythro-1-(imidazol-4-yl)glycerol 3-phosphate = 3-(imidazol-4-yl)-2-oxopropyl phosphate + H2O. It functions in the pathway amino-acid biosynthesis; L-histidine biosynthesis; L-histidine from 5-phospho-alpha-D-ribose 1-diphosphate: step 6/9. The polypeptide is Imidazoleglycerol-phosphate dehydratase (Kineococcus radiotolerans (strain ATCC BAA-149 / DSM 14245 / SRS30216)).